A 156-amino-acid polypeptide reads, in one-letter code: Transcription elongation factor GreA (156 aa).

The stretch at 46 to 66 (AEYHAAREKQSFVEGRIKELE) forms a coiled coil.

The protein belongs to the GreA/GreB family.

In terms of biological role, necessary for efficient RNA polymerase transcription elongation past template-encoded arresting sites. The arresting sites in DNA have the property of trapping a certain fraction of elongating RNA polymerases that pass through, resulting in locked ternary complexes. Cleavage of the nascent transcript by cleavage factors such as GreA or GreB allows the resumption of elongation from the new 3'terminus. GreA releases sequences of 2 to 3 nucleotides. In Paracoccus denitrificans (strain Pd 1222), this protein is Transcription elongation factor GreA.